A 160-amino-acid chain; its full sequence is Ureidoglycolate lyase (160 aa).

It belongs to the ureidoglycolate lyase family. As to quaternary structure, homodimer. The cofactor is Ni(2+).

It carries out the reaction (S)-ureidoglycolate = urea + glyoxylate. Its pathway is nitrogen metabolism; (S)-allantoin degradation. Functionally, catalyzes the catabolism of the allantoin degradation intermediate (S)-ureidoglycolate, generating urea and glyoxylate. Involved in the anaerobic utilization of allantoin as sole nitrogen source. Reinforces the induction of genes involved in the degradation of allantoin and glyoxylate by producing glyoxylate. This chain is Ureidoglycolate lyase, found in Escherichia coli O127:H6 (strain E2348/69 / EPEC).